An 80-amino-acid chain; its full sequence is Small ribosomal subunit protein bS18 (80 aa).

This sequence belongs to the bacterial ribosomal protein bS18 family. As to quaternary structure, part of the 30S ribosomal subunit. Forms a tight heterodimer with protein bS6.

In terms of biological role, binds as a heterodimer with protein bS6 to the central domain of the 16S rRNA, where it helps stabilize the platform of the 30S subunit. The polypeptide is Small ribosomal subunit protein bS18 (Staphylococcus carnosus (strain TM300)).